A 600-amino-acid polypeptide reads, in one-letter code: Adenine deaminase (600 aa).

Belongs to the metallo-dependent hydrolases superfamily. Adenine deaminase family. The cofactor is Mn(2+).

It carries out the reaction adenine + H2O + H(+) = hypoxanthine + NH4(+). This is Adenine deaminase from Bradyrhizobium sp. (strain BTAi1 / ATCC BAA-1182).